The following is a 729-amino-acid chain: Fatty acid oxidation complex subunit alpha (729 aa).

Residues 1-189 (MLYKGDTLYL…KIGLVDGVVK (189 aa)) are enoyl-CoA hydratase/isomerase. Asp-296 provides a ligand contact to substrate. The interval 311-729 (ETPKQAAVLG…ARPVGDLKTA (419 aa)) is 3-hydroxyacyl-CoA dehydrogenase. Residues Met-324, Asp-343, 400–402 (VVE), Lys-407, and Ser-429 contribute to the NAD(+) site. Catalysis depends on His-450, which acts as the For 3-hydroxyacyl-CoA dehydrogenase activity. Asn-453 is a binding site for NAD(+). Residues Asn-500 and Tyr-660 each contribute to the substrate site. The segment at 708–729 (RHNEPYYPPVEPARPVGDLKTA) is disordered.

This sequence in the N-terminal section; belongs to the enoyl-CoA hydratase/isomerase family. The protein in the C-terminal section; belongs to the 3-hydroxyacyl-CoA dehydrogenase family. As to quaternary structure, heterotetramer of two alpha chains (FadB) and two beta chains (FadA).

It catalyses the reaction a (3S)-3-hydroxyacyl-CoA + NAD(+) = a 3-oxoacyl-CoA + NADH + H(+). The enzyme catalyses a (3S)-3-hydroxyacyl-CoA = a (2E)-enoyl-CoA + H2O. It carries out the reaction a 4-saturated-(3S)-3-hydroxyacyl-CoA = a (3E)-enoyl-CoA + H2O. The catalysed reaction is (3S)-3-hydroxybutanoyl-CoA = (3R)-3-hydroxybutanoyl-CoA. It catalyses the reaction a (3Z)-enoyl-CoA = a 4-saturated (2E)-enoyl-CoA. The enzyme catalyses a (3E)-enoyl-CoA = a 4-saturated (2E)-enoyl-CoA. It functions in the pathway lipid metabolism; fatty acid beta-oxidation. Its function is as follows. Involved in the aerobic and anaerobic degradation of long-chain fatty acids via beta-oxidation cycle. Catalyzes the formation of 3-oxoacyl-CoA from enoyl-CoA via L-3-hydroxyacyl-CoA. It can also use D-3-hydroxyacyl-CoA and cis-3-enoyl-CoA as substrate. The sequence is that of Fatty acid oxidation complex subunit alpha from Shigella flexneri serotype 5b (strain 8401).